The following is a 415-amino-acid chain: Polyketide biosynthesis malonyl-ACP decarboxylase PksF (415 aa).

Residues 6-407 (LPEVVVTGVG…GMNTAVCIQN (402 aa)) form the Ketosynthase family 3 (KS3) domain.

The protein belongs to the thiolase-like superfamily. Beta-ketoacyl-ACP synthases family.

It is found in the cytoplasm. The catalysed reaction is malonyl-[ACP] + H(+) = acetyl-[ACP] + CO2. It participates in antibiotic biosynthesis; bacillaene biosynthesis. Functionally, involved in some intermediate steps for the synthesis of the antibiotic polyketide bacillaene which is involved in secondary metabolism. It decarboxylates selectively the malonyl group attached on the acyl-carrier-protein AcpK (Mal-AcpK). This chain is Polyketide biosynthesis malonyl-ACP decarboxylase PksF (pksF), found in Bacillus subtilis (strain 168).